A 750-amino-acid polypeptide reads, in one-letter code: Photosystem I P700 chlorophyll a apoprotein A1 (750 aa).

The next 8 membrane-spanning stretches (helical) occupy residues 70–93 (VFSA…FHGA), 156–179 (LYCT…FHYH), 195–219 (LNHH…HVSL), 291–309 (IAHH…GHMY), 346–369 (WHAQ…HHMY), 385–411 (LSLF…IFMV), 433–455 (AIIS…LYIH), and 531–549 (FLVH…LILL). C573 and C582 together coordinate [4Fe-4S] cluster. Helical transmembrane passes span 589-610 (HVFL…HFSW) and 664-686 (LSAY…MFLF). Residue H675 coordinates chlorophyll a'. Chlorophyll a is bound by residues M683 and Y691. W692 contacts phylloquinone. The chain crosses the membrane as a helical span at residues 724–744 (AVGVTHYLLGGIATTWAFFLA).

This sequence belongs to the PsaA/PsaB family. The PsaA/B heterodimer binds the P700 chlorophyll special pair and subsequent electron acceptors. PSI consists of a core antenna complex that captures photons, and an electron transfer chain that converts photonic excitation into a charge separation. The eukaryotic PSI reaction center is composed of at least 11 subunits. The cofactor is P700 is a chlorophyll a/chlorophyll a' dimer, A0 is one or more chlorophyll a, A1 is one or both phylloquinones and FX is a shared 4Fe-4S iron-sulfur center..

The protein localises to the plastid. It localises to the chloroplast thylakoid membrane. It catalyses the reaction reduced [plastocyanin] + hnu + oxidized [2Fe-2S]-[ferredoxin] = oxidized [plastocyanin] + reduced [2Fe-2S]-[ferredoxin]. Its function is as follows. PsaA and PsaB bind P700, the primary electron donor of photosystem I (PSI), as well as the electron acceptors A0, A1 and FX. PSI is a plastocyanin-ferredoxin oxidoreductase, converting photonic excitation into a charge separation, which transfers an electron from the donor P700 chlorophyll pair to the spectroscopically characterized acceptors A0, A1, FX, FA and FB in turn. Oxidized P700 is reduced on the lumenal side of the thylakoid membrane by plastocyanin. This Drimys granadensis protein is Photosystem I P700 chlorophyll a apoprotein A1.